The following is a 185-amino-acid chain: MISAGDLRKGTTFELDGQVYTVIDFLHVKPGKGAAFVRTKLRNVISGGVTETTFNPTAKLQEAVIERKEMQYLYSDGELYYFMDQETFEQIPLNFEQVENAIKFLKENMFAIIKFYKGAAFSVEAPNFVELQIVECEPGIKGNTATNAMKPAKLETGAVVNVPLFVNEGETIRVDTRTGDYMERV.

It belongs to the elongation factor P family.

It is found in the cytoplasm. It functions in the pathway protein biosynthesis; polypeptide chain elongation. In terms of biological role, involved in peptide bond synthesis. Stimulates efficient translation and peptide-bond synthesis on native or reconstituted 70S ribosomes in vitro. Probably functions indirectly by altering the affinity of the ribosome for aminoacyl-tRNA, thus increasing their reactivity as acceptors for peptidyl transferase. This is Elongation factor P from Clostridium novyi (strain NT).